The primary structure comprises 126 residues: UPF0235 protein C15orf40 homolog (126 aa).

The disordered stretch occupies residues M1–K33. S89 is modified (phosphoserine).

The protein belongs to the UPF0235 family.

The protein is UPF0235 protein C15orf40 homolog of Rattus norvegicus (Rat).